A 786-amino-acid polypeptide reads, in one-letter code: Tyrosine-protein kinase Btk (786 aa).

The interval 1-23 (MMGTKHRNSHVNGSIKSSSSLRS) is disordered. Positions 14–23 (SIKSSSSLRS) are enriched in low complexity. The region spanning 41–184 (DVVKSGSMVK…WIRAIRQVCE (144 aa)) is the PH domain. The Btk-type zinc-finger motif lies at 187 to 223 (NTPKSYRYHPGLWSGKKWSCCKGLSRTTFGCRAAAHW). Residues His195, Cys206, Cys207, and Cys217 each coordinate Zn(2+). Over residues 226 to 240 (ANNNPSNGSSPAQNS) the composition is skewed to low complexity. The interval 226 to 301 (ANNNPSNGSS…TPTSLQPQSS (76 aa)) is disordered. A compositionally biased stretch (polar residues) spans 241–260 (TRSISPNSSTTNSQFSLQHN). Gly residues predominate over residues 264-290 (SLGGGVGGGLGGGGSLGLGGGGGGGGS). Positions 291–301 (CTPTSLQPQSS) are enriched in polar residues. The SH3 domain maps to 342 to 402 (HFVKLVVALY…PSNYVKPKAL (61 aa)). Residues 410-503 (WYVGDMSRQR…GLACRLKSSP (94 aa)) enclose the SH2 domain. Residues 526-779 (LMLMEELGSG…FRVLMDQLAL (254 aa)) enclose the Protein kinase domain. ATP contacts are provided by residues 532–540 (LGSGQFGVV) and Lys554. Asp647 serves as the catalytic Proton acceptor. At Tyr677 the chain carries Phosphotyrosine; by autocatalysis.

Belongs to the protein kinase superfamily. Tyr protein kinase family. TEC subfamily. Zn(2+) serves as cofactor. In terms of tissue distribution, ring canals in the egg chambers and imaginal disks of third-instar larvae.

The enzyme catalyses L-tyrosyl-[protein] + ATP = O-phospho-L-tyrosyl-[protein] + ADP + H(+). In terms of biological role, required for proper ring canal development. Also required for the development of male genitalia and for adult survival. This is Tyrosine-protein kinase Btk from Drosophila melanogaster (Fruit fly).